Reading from the N-terminus, the 493-residue chain is Cytoplasmic tRNA 2-thiolation protein 2 (493 aa).

Position 489 is a phosphoserine (serine 489).

Belongs to the CTU2/NCS2 family. As to quaternary structure, interacts with NCS6 and URM1. May act by forming a heterodimer with NCS6.

It localises to the cytoplasm. It functions in the pathway tRNA modification; 5-methoxycarbonylmethyl-2-thiouridine-tRNA biosynthesis. Its function is as follows. Plays a central role in 2-thiolation of mcm(5)S(2)U at tRNA wobble positions of tRNA(Lys), tRNA(Glu) and tRNA(Gln). May act by forming a heterodimer with NCS6 that ligates sulfur from thiocarboxylated URM1 onto the uridine of tRNAs at wobble position. Prior mcm(5) tRNA modification by the elongator complex is required for 2-thiolation. May also be involved in protein urmylation. The sequence is that of Cytoplasmic tRNA 2-thiolation protein 2 from Saccharomyces cerevisiae (strain RM11-1a) (Baker's yeast).